A 62-amino-acid chain; its full sequence is Small ribosomal subunit protein bS21C (62 aa).

The tract at residues 43 to 62 is disordered; that stretch reads EKSKRKKLALHKQSKRRFRT. Positions 45 to 62 are enriched in basic residues; it reads SKRKKLALHKQSKRRFRT.

The protein belongs to the bacterial ribosomal protein bS21 family.

The protein is Small ribosomal subunit protein bS21C of Trichormus variabilis (strain ATCC 29413 / PCC 7937) (Anabaena variabilis).